The sequence spans 342 residues: Dihydroorotate dehydrogenase (quinone) (342 aa).

FMN is bound by residues Ala-60–Lys-64 and Thr-84. Lys-64 is a substrate binding site. Asn-109–Phe-113 contributes to the substrate binding site. Residues Asn-137 and Asn-170 each coordinate FMN. Asn-170 lines the substrate pocket. Ser-173 serves as the catalytic Nucleophile. Residue Asn-175 coordinates substrate. Residues Lys-215 and Thr-243 each coordinate FMN. Position 244 to 245 (Asn-244 to Thr-245) interacts with substrate. Residues Gly-266, Gly-295, and Tyr-316–Ser-317 each bind FMN.

This sequence belongs to the dihydroorotate dehydrogenase family. Type 2 subfamily. In terms of assembly, monomer. FMN serves as cofactor.

It localises to the cell membrane. The enzyme catalyses (S)-dihydroorotate + a quinone = orotate + a quinol. It functions in the pathway pyrimidine metabolism; UMP biosynthesis via de novo pathway; orotate from (S)-dihydroorotate (quinone route): step 1/1. Functionally, catalyzes the conversion of dihydroorotate to orotate with quinone as electron acceptor. This Nitrosomonas europaea (strain ATCC 19718 / CIP 103999 / KCTC 2705 / NBRC 14298) protein is Dihydroorotate dehydrogenase (quinone).